The following is a 3410-amino-acid chain: Genome polyprotein (3410 aa).

The Cytoplasmic segment spans residues 1–103 (MTKKPGRPGR…DFVHLPKKKS (103 aa)). Residues 2-15 (TKKPGRPGRNRAVN) form an interaction with host EXOC1 region. Residues 38-73 (LLDGRGPLRMVLAILAFFRFTALKPTAGLLKRWGMM) form a hydrophobic; homodimerization of capsid protein C region. A propeptide spans 103–119 (SGVSIIGRMLVFSFTAA) (ER anchor for the capsid protein C, removed in mature form by serine protease NS3). A helical transmembrane segment spans residues 104–124 (GVSIIGRMLVFSFTAAVRVTL). The Extracellular portion of the chain corresponds to 125–245 (ENGMSLMKIQ…ATSYLTKAES (121 aa)). The chain crosses the membrane as a helical span at residues 246-266 (WALRNPGYALVAAVLGWSLGT). Topologically, residues 267 to 271 (SNAQK) are cytoplasmic. The helical transmembrane segment at 272-286 (VIFTVMILLIAPAYS) threads the bilayer. At 287–739 (IRCVGVENRD…QIFGGMFRTL (453 aa)) the chain is on the extracellular side. 6 cysteine pairs are disulfide-bonded: C289–C316, C346–C402, C346–C407, C360–C391, C378–C402, and C378–C407. The fusion peptide stretch occupies residues 384 to 397 (DRGWGNGCGLFGKG). Residue N440 is glycosylated (N-linked (GlcNAc...) asparagine; by host). Cystine bridges form between C476–C574 and C591–C622. A helical transmembrane segment spans residues 740-760 (FGGMSWFTQIMIGALCCWLGI). Topologically, residues 761 to 766 (NARDRT) are cytoplasmic. Residues 767 to 787 (IAVTFLAVGGVLVFLATSVNA) traverse the membrane as a helical segment. The Extracellular segment spans residues 788–1165 (DSGCALDLKR…IALQEVMRKR (378 aa)). 8 disulfides stabilise this stretch: C791–C802, C842–C928, C964–C1009, C1066–C1115, C1077–C1098, C1077–C1099, C1098–C1102, and C1099–C1102. N-linked (GlcNAc...) asparagine; by host glycosylation is present at N915. A helical membrane pass occupies residues 1166–1186 (ILGRHITWMVIAVFMAMILGG). The Cytoplasmic segment spans residues 1187–1214 (LSYRDLGRYLVLVGAAFAERNSGGDLLH). The helical transmembrane segment at 1215–1235 (LVLVATFKVKPMALLGFVLGG) threads the bilayer. Over 1236-1242 (RWCRRQS) the chain is Lumenal. The chain crosses the membrane as a helical span at residues 1243-1263 (LLLSIGAVLVNFALEFQGGYF). Topologically, residues 1264-1284 (ELVDSLALALLFVKAVVQTDT) are cytoplasmic. Residues 1285–1305 (TSVSLPLLAALAPAGCYTVLG) form a helical membrane-spanning segment. The Lumenal segment spans residues 1306–1335 (THRFIMLTLVLVTFLGCKKTASVKKAGTAA). Residues 1336 to 1356 (VGVVLGMVGMKTIPMLGMLMV) form a helical membrane-spanning segment. The Cytoplasmic portion of the chain corresponds to 1357-1363 (TSRARRS). A helical membrane pass occupies residues 1364–1384 (WPLHEAMAAVGILCALFGALA). The Lumenal portion of the chain corresponds to 1385 to 1387 (ETE). The helical transmembrane segment at 1388-1408 (VDLAGPLAAAGLIVMAYVISG) threads the bilayer. The Cytoplasmic portion of the chain corresponds to 1409 to 1464 (RSNDLSIKKVEDVKWSDEAEVTGESVSYHVSLDVRGDPTLTEDSGPGLEKVLLKVG). Positions 1415–1454 (IKKVEDVKWSDEAEVTGESVSYHVSLDVRGDPTLTEDSGP) are interacts with and activates NS3 protease. The helical intramembrane region spans 1465–1485 (LMAISGIYPVAIPFALGAWFF). The Cytoplasmic portion of the chain corresponds to 1486–2158 (LEKRCKRAGA…KAALENSPEM (673 aa)). Residues 1493 to 1670 (AGALWDIPSP…ENVGQEDGAE (178 aa)) form the Peptidase S7 domain. Catalysis depends on charge relay system; for serine protease NS3 activity residues H1543, D1567, and S1627. The Helicase ATP-binding domain occupies 1673 to 1829 (DNWFRKRELT…PSNSPIIDEE (157 aa)). An important for RNA-binding region spans residues 1677–1680 (RKRE). 1686–1693 (LHPGAGKT) contributes to the ATP binding site. The DEAH box signature appears at 1777–1780 (DEAH). In terms of domain architecture, Helicase C-terminal spans 1839 to 2006 (SGYEWIIEFD…QLYTPEREKT (168 aa)). K1881 is subject to N6-acetyllysine; by host. Residues 2153 to 2157 (ENSPE) are regulates the ATPase activity of NS3 helicase. A helical membrane pass occupies residues 2159-2179 (IETFLLCALVCLMTIGLVVVL). Over 2180-2185 (VRGKGP) the chain is Lumenal. The segment at residues 2186–2205 (GKLAFGMVSIGVMTWLLWSA) is an intramembrane region (helical). Residue G2206 is a topological domain, lumenal. Residues 2207–2227 (VDPGKIAAAVILVFLLLVVLI) form a helical membrane-spanning segment. Over 2228 to 2242 (PEPEKQRSVQDNQLA) the chain is Cytoplasmic. A helical membrane pass occupies residues 2243–2257 (MLMLLIATILGGVAA). Residues 2258-2293 (NEMGWLEKTKADLSWVVRGRSSTTTPVVELDMKPAT) are Lumenal-facing. The helical intramembrane region spans 2294–2314 (AWTLYALATTLLTPLFQHLIV). Residues 2315 to 2336 (TKYANISLMAIASQAGTLFSMD) lie on the Lumenal side of the membrane. The helical transmembrane segment at 2337-2357 (SGIPFSSIELSVPLLALGCWT) threads the bilayer. Residue Q2358 is a topological domain, cytoplasmic. The helical transmembrane segment at 2359-2379 (ITPCSLILACVLLSTHYAILL) threads the bilayer. Residues 2380 to 2420 (PGMQAQAARDAQRRTAAGIMKNAVVDGIVATDIPPLDGAGP) lie on the Lumenal side of the membrane. The chain crosses the membrane as a helical span at residues 2421-2441 (LTEKKLGQLLLFAAAVTGVVI). Over 2442–3410 (TRSPRSWSEL…EKRVEFRGVL (969 aa)) the chain is Cytoplasmic. Positions 2508–2773 (GGGIGETLGE…DVNLSCGTRA (266 aa)) constitute an mRNA cap 0-1 NS5-type MT domain. Residue S2563 participates in S-adenosyl-L-methionine binding. S2563 bears the Phosphoserine mark. K2568 serves as the catalytic For 2'-O-MTase activity. G2593, W2594, T2611, K2612, D2638, and V2639 together coordinate S-adenosyl-L-methionine. D2653 (for 2'-O-MTase activity) is an active-site residue. I2654 is a binding site for S-adenosyl-L-methionine. Active-site for 2'-O-MTase activity residues include K2690 and E2726. Y2728 contributes to the S-adenosyl-L-methionine binding site. Zn(2+)-binding residues include E2947, H2951, C2956, and C2959. A RdRp catalytic domain is found at 3036–3187 (GILYADDTAG…AAPDARFGAA (152 aa)). Zn(2+)-binding residues include H3222, C3238, and C3356.

The protein in the N-terminal section; belongs to the class I-like SAM-binding methyltransferase superfamily. mRNA cap 0-1 NS5-type methyltransferase family. As to quaternary structure, homodimer. Interacts (via N-terminus) with host EXOC1 (via C-terminus); this interaction results in EXOC1 degradation through the proteasome degradation pathway. In terms of assembly, forms heterodimers with envelope protein E in the endoplasmic reticulum and Golgi. Homodimer; in the endoplasmic reticulum and Golgi. Interacts with protein prM. Interacts with non-structural protein 1. As to quaternary structure, homodimer; Homohexamer when secreted. Interacts with envelope protein E. NS1 interacts with NS4B. Interacts with host complement protein CFH; this interaction leads to the degradation of C3. In terms of assembly, interacts (via N-terminus) with serine protease NS3. Forms a heterodimer with serine protease NS3. May form homooligomers. As to quaternary structure, forms a heterodimer with NS2B. Interacts with non-structural protein 2A (via N-terminus). Interacts with NS4B. Interacts with unphosphorylated RNA-directed RNA polymerase NS5; this interaction stimulates RNA-directed RNA polymerase NS5 guanylyltransferase activity. In terms of assembly, interacts with serine protease NS3. Homodimer. Interacts with host STAT2; this interaction inhibits the phosphorylation of the latter, and, when all viral proteins are present (polyprotein), targets STAT2 for degradation. In terms of processing, specific enzymatic cleavages in vivo yield mature proteins. Cleavages in the lumen of endoplasmic reticulum are performed by host signal peptidase, whereas cleavages in the cytoplasmic side are performed by serine protease NS3. Signal cleavage at the 2K-4B site requires a prior NS3 protease-mediated cleavage at the 4A-2K site. Post-translationally, cleaved in post-Golgi vesicles by a host furin, releasing the mature small envelope protein M, and peptide pr. This cleavage is incomplete as up to 30% of viral particles still carry uncleaved prM. N-glycosylated. In terms of processing, N-glycosylated. The excreted form is glycosylated and this is required for efficient secretion of the protein from infected cells. Post-translationally, acetylated by host KAT5. Acetylation modulates NS3 RNA-binding and unwinding activities and plays an important positive role for viral replication. Phosphorylated on serines residues. This phosphorylation may trigger NS5 nuclear localization.

Its subcellular location is the virion. The protein resides in the host nucleus. It localises to the host cytoplasm. It is found in the host perinuclear region. The protein localises to the secreted. Its subcellular location is the virion membrane. The protein resides in the host endoplasmic reticulum membrane. It carries out the reaction Selective hydrolysis of -Xaa-Xaa-|-Yaa- bonds in which each of the Xaa can be either Arg or Lys and Yaa can be either Ser or Ala.. It catalyses the reaction RNA(n) + a ribonucleoside 5'-triphosphate = RNA(n+1) + diphosphate. The enzyme catalyses a ribonucleoside 5'-triphosphate + H2O = a ribonucleoside 5'-diphosphate + phosphate + H(+). The catalysed reaction is ATP + H2O = ADP + phosphate + H(+). It carries out the reaction a 5'-end (5'-triphosphoguanosine)-ribonucleoside in mRNA + S-adenosyl-L-methionine = a 5'-end (N(7)-methyl 5'-triphosphoguanosine)-ribonucleoside in mRNA + S-adenosyl-L-homocysteine. It catalyses the reaction a 5'-end (N(7)-methyl 5'-triphosphoguanosine)-ribonucleoside in mRNA + S-adenosyl-L-methionine = a 5'-end (N(7)-methyl 5'-triphosphoguanosine)-(2'-O-methyl-ribonucleoside) in mRNA + S-adenosyl-L-homocysteine + H(+). Its function is as follows. Plays a role in virus budding by binding to the cell membrane and gathering the viral RNA into a nucleocapsid that forms the core of a mature virus particle. During virus entry, may induce genome penetration into the host cytoplasm after hemifusion induced by the surface proteins. Can migrate to the cell nucleus where it modulates host functions. Overcomes the anti-viral effects of host EXOC1 by sequestering and degrading the latter through the proteasome degradation pathway. In terms of biological role, inhibits RNA silencing by interfering with host Dicer. Functionally, prevents premature fusion activity of envelope proteins in trans-Golgi by binding to envelope protein E at pH6.0. After virion release in extracellular space, gets dissociated from E dimers. Acts as a chaperone for envelope protein E during intracellular virion assembly by masking and inactivating envelope protein E fusion peptide. prM is the only viral peptide matured by host furin in the trans-Golgi network probably to avoid catastrophic activation of the viral fusion activity in acidic Golgi compartment prior to virion release. prM-E cleavage is inefficient, and many virions are only partially matured. These uncleaved prM would play a role in immune evasion. Its function is as follows. May play a role in virus budding. Exerts cytotoxic effects by activating a mitochondrial apoptotic pathway through M ectodomain. May display a viroporin activity. In terms of biological role, binds to host cell surface receptor and mediates fusion between viral and cellular membranes. Envelope protein is synthesized in the endoplasmic reticulum in the form of heterodimer with protein prM. They play a role in virion budding in the ER, and the newly formed immature particle is covered with 60 spikes composed of heterodimer between precursor prM and envelope protein E. The virion is transported to the Golgi apparatus where the low pH causes dissociation of PrM-E heterodimers and formation of E homodimers. prM-E cleavage is inefficient, and many virions are only partially matured. These uncleaved prM would play a role in immune evasion. Functionally, involved in immune evasion, pathogenesis and viral replication. Once cleaved off the polyprotein, is targeted to three destinations: the viral replication cycle, the plasma membrane and the extracellular compartment. Essential for viral replication. Required for formation of the replication complex and recruitment of other non-structural proteins to the ER-derived membrane structures. Excreted as a hexameric lipoparticle that plays a role against host immune response. Antagonizing the complement function. Binds to the host macrophages and dendritic cells. Inhibits signal transduction originating from Toll-like receptor 3 (TLR3). Component of the viral RNA replication complex that functions in virion assembly and antagonizes the host alpha/beta interferon antiviral response. Its function is as follows. Required cofactor for the serine protease function of NS3. May have membrane-destabilizing activity and form viroporins. In terms of biological role, displays three enzymatic activities: serine protease, NTPase and RNA helicase. NS3 serine protease, in association with NS2B, performs its autocleavage and cleaves the polyprotein at dibasic sites in the cytoplasm: C-prM, NS2A-NS2B, NS2B-NS3, NS3-NS4A, NS4A-2K and NS4B-NS5. NS3 RNA helicase binds RNA and unwinds dsRNA in the 3' to 5' direction. Functionally, regulates the ATPase activity of the NS3 helicase activity. NS4A allows NS3 helicase to conserve energy during unwinding. Functions as a signal peptide for NS4B and is required for the interferon antagonism activity of the latter. Its function is as follows. Induces the formation of ER-derived membrane vesicles where the viral replication takes place. Inhibits interferon (IFN)-induced host STAT1 phosphorylation and nuclear translocation, thereby preventing the establishment of cellular antiviral state by blocking the IFN-alpha/beta pathway. Inhibits STAT2 translocation in the nucleus after IFN-alpha treatment. In terms of biological role, replicates the viral (+) and (-) RNA genome, and performs the capping of genomes in the cytoplasm. NS5 methylates viral RNA cap at guanine N-7 and ribose 2'-O positions. Besides its role in RNA genome replication, also prevents the establishment of cellular antiviral state by blocking the interferon-alpha/beta (IFN-alpha/beta) signaling pathway. Inhibits host TYK2 and STAT2 phosphorylation, thereby preventing activation of JAK-STAT signaling pathway. The sequence is that of Genome polyprotein from Kokobera virus (KOKV).